An 84-amino-acid chain; its full sequence is Small ribosomal subunit protein bS18 (84 aa).

This sequence belongs to the bacterial ribosomal protein bS18 family. In terms of assembly, part of the 30S ribosomal subunit. Forms a tight heterodimer with protein bS6.

In terms of biological role, binds as a heterodimer with protein bS6 to the central domain of the 16S rRNA, where it helps stabilize the platform of the 30S subunit. This Mycobacterium leprae (strain Br4923) protein is Small ribosomal subunit protein bS18.